Reading from the N-terminus, the 177-residue chain is Large ribosomal subunit protein uL6 (177 aa).

Belongs to the universal ribosomal protein uL6 family. In terms of assembly, part of the 50S ribosomal subunit.

Functionally, this protein binds to the 23S rRNA, and is important in its secondary structure. It is located near the subunit interface in the base of the L7/L12 stalk, and near the tRNA binding site of the peptidyltransferase center. The chain is Large ribosomal subunit protein uL6 from Sodalis glossinidius (strain morsitans).